Reading from the N-terminus, the 453-residue chain is Bifunctional protein GlmU (453 aa).

The pyrophosphorylase stretch occupies residues 1-225 (MNIVILAAGT…GWETLGVNSK (225 aa)). UDP-N-acetyl-alpha-D-glucosamine-binding positions include 6–9 (LAAG), Lys-20, Gln-71, 76–77 (GT), 98–100 (YGD), Gly-135, Glu-150, Asn-165, and Asn-223. Asp-100 is a binding site for Mg(2+). Asn-223 is a Mg(2+) binding site. The interval 226 to 246 (AQLAELERIHQRNLADALLAA) is linker. The interval 247-453 (GVTLADPARI…GYVRPVKKKS (207 aa)) is N-acetyltransferase. UDP-N-acetyl-alpha-D-glucosamine-binding residues include Arg-329 and Lys-347. The active-site Proton acceptor is His-359. UDP-N-acetyl-alpha-D-glucosamine-binding residues include Tyr-362 and Asn-373. Residues Ala-376, 382 to 383 (NY), Ser-401, and Ala-419 contribute to the acetyl-CoA site.

The protein in the N-terminal section; belongs to the N-acetylglucosamine-1-phosphate uridyltransferase family. In the C-terminal section; belongs to the transferase hexapeptide repeat family. In terms of assembly, homotrimer. Mg(2+) is required as a cofactor.

It localises to the cytoplasm. The catalysed reaction is alpha-D-glucosamine 1-phosphate + acetyl-CoA = N-acetyl-alpha-D-glucosamine 1-phosphate + CoA + H(+). The enzyme catalyses N-acetyl-alpha-D-glucosamine 1-phosphate + UTP + H(+) = UDP-N-acetyl-alpha-D-glucosamine + diphosphate. It functions in the pathway nucleotide-sugar biosynthesis; UDP-N-acetyl-alpha-D-glucosamine biosynthesis; N-acetyl-alpha-D-glucosamine 1-phosphate from alpha-D-glucosamine 6-phosphate (route II): step 2/2. It participates in nucleotide-sugar biosynthesis; UDP-N-acetyl-alpha-D-glucosamine biosynthesis; UDP-N-acetyl-alpha-D-glucosamine from N-acetyl-alpha-D-glucosamine 1-phosphate: step 1/1. The protein operates within bacterial outer membrane biogenesis; LPS lipid A biosynthesis. Catalyzes the last two sequential reactions in the de novo biosynthetic pathway for UDP-N-acetylglucosamine (UDP-GlcNAc). The C-terminal domain catalyzes the transfer of acetyl group from acetyl coenzyme A to glucosamine-1-phosphate (GlcN-1-P) to produce N-acetylglucosamine-1-phosphate (GlcNAc-1-P), which is converted into UDP-GlcNAc by the transfer of uridine 5-monophosphate (from uridine 5-triphosphate), a reaction catalyzed by the N-terminal domain. The polypeptide is Bifunctional protein GlmU (Burkholderia pseudomallei (strain K96243)).